The sequence spans 419 residues: Histidine--tRNA ligase (419 aa).

It belongs to the class-II aminoacyl-tRNA synthetase family. In terms of assembly, homodimer.

It is found in the cytoplasm. The enzyme catalyses tRNA(His) + L-histidine + ATP = L-histidyl-tRNA(His) + AMP + diphosphate + H(+). This is Histidine--tRNA ligase from Methylobacillus flagellatus (strain ATCC 51484 / DSM 6875 / VKM B-1610 / KT).